The chain runs to 191 residues: Protein adenylyltransferase NmFic (191 aa).

In terms of domain architecture, Fido spans 37–162; sequence GTTAGLQQIH…NDLELRFLLK (126 aa). Residues K67, 104–107, 112–118, and 140–143 contribute to the ATP site; these read NIAH, GNGRSTR, and KTLY. The short motif at 182 to 187 is the Inhibitory (S/T)XXXE(G/N) motif element; that stretch reads SYYYEG. Residue Y183 is modified to O-AMP-tyrosine; in vitro. Position 186 (E186) interacts with ATP.

In terms of assembly, homodimer. Post-translationally, auto-AMPylation at Tyr-183 in vitro.

It carries out the reaction L-tyrosyl-[protein] + ATP = O-(5'-adenylyl)-L-tyrosyl-[protein] + diphosphate. The enzyme catalyses L-threonyl-[protein] + ATP = 3-O-(5'-adenylyl)-L-threonyl-[protein] + diphosphate. Its activity is regulated as follows. Adenylyltransferase activity is inhibited by the inhibitory helix present at the C-terminus: Glu-186 binds ATP and competes with ATP-binding at Arg-118, thereby preventing adenylyltransferase activity. Activation dissociates ATP-binding from Glu-186, allowing ordered binding of the entire ATP moiety with the alpha-phosphate in an orientation that is productive for accepting an incoming target hydroxyl side chain. In terms of biological role, adenylyltransferase that mediates the addition of adenosine 5'-monophosphate (AMP) to specific residues of target proteins. In Neisseria meningitidis serogroup B (strain ATCC BAA-335 / MC58), this protein is Protein adenylyltransferase NmFic.